A 179-amino-acid polypeptide reads, in one-letter code: Putative ADP-ribosylation factor-like protein 5C (179 aa).

The N-myristoyl glycine moiety is linked to residue glycine 2. GTP-binding positions include 23 to 30 (GLDNEGKT), 66 to 70 (DIVRP), and 125 to 128 (NKQD).

It belongs to the small GTPase superfamily. Arf family.

In terms of biological role, binds and exchanges GTP and GDP. The chain is Putative ADP-ribosylation factor-like protein 5C (ARL5C) from Homo sapiens (Human).